Here is a 396-residue protein sequence, read N- to C-terminus: MLRDGNKQSKNNVRFVRKSIKTTVKTSLQNRSSLKKPPVGRSKSRSISSIPSSAVASTLSLPEKVETKCLEEDTQGESSSSGNKDPTTKVLDVTAKPKSKRRKSFTSLLVNGSKFDEKNGETTEPEKLPSIDDESNQLEVAEYVDDIYQFYWTAEALNPALGHYLSAHAEVSPVTRGILINWLIEVHFKFDLMHETLYLTMDLLDRYLSQVPIHKNEMQLIGLTALLLASKYEDYWHPRIKDLISISAESYTREQILGMERSMLKQLKFRLNAPTPYVFMLRFLKAAQSNKKLEQLAFYLIELCLVEYEALKYKPSLLCASAIYVARCTLHMTPVWTSLLNNHTHYNVSQMKDCSDMILRFHKAAKTGNLRVTYEKYINPDRSNVAVLKPLDKLPL.

Residues 1 to 98 form a disordered region; sequence MLRDGNKQSK…KVLDVTAKPK (98 aa). The segment covering 21–32 has biased composition (polar residues); the sequence is KTTVKTSLQNRS. Over residues 39-57 the composition is skewed to low complexity; it reads VGRSKSRSISSIPSSAVAS. The segment covering 76–85 has biased composition (polar residues); the sequence is GESSSSGNKD.

This sequence belongs to the cyclin family. Cyclin AB subfamily.

The chain is Putative cyclin-B3-1 (CYCB3-1) from Arabidopsis thaliana (Mouse-ear cress).